Here is a 401-residue protein sequence, read N- to C-terminus: Tyrosine--tRNA ligase (401 aa).

Positions 42-51 (PTAPDLHLGH) match the 'HIGH' region motif. A 'KMSKS' region motif is present at residues 226–230 (KMSKS). An ATP-binding site is contributed by Lys-229. The region spanning 336–397 (IALAQLLKQI…GKRRIAKLSI (62 aa)) is the S4 RNA-binding domain.

Belongs to the class-I aminoacyl-tRNA synthetase family. TyrS type 2 subfamily. In terms of assembly, homodimer.

The protein localises to the cytoplasm. It carries out the reaction tRNA(Tyr) + L-tyrosine + ATP = L-tyrosyl-tRNA(Tyr) + AMP + diphosphate + H(+). Catalyzes the attachment of tyrosine to tRNA(Tyr) in a two-step reaction: tyrosine is first activated by ATP to form Tyr-AMP and then transferred to the acceptor end of tRNA(Tyr). This is Tyrosine--tRNA ligase from Legionella pneumophila subsp. pneumophila (strain Philadelphia 1 / ATCC 33152 / DSM 7513).